Consider the following 857-residue polypeptide: Trehalose transporter 1 (857 aa).

Disordered regions lie at residues M1 to E28 and D62 to T202. Topologically, residues M1–Y392 are cytoplasmic. Position 9 is a phosphothreonine (A9). G12 bears the Phosphoserine mark. Residues V69–T81 show a composition bias toward polar residues. Residues E134–Q143 show a composition bias toward basic and acidic residues. Polar residues predominate over residues G171 to A181. 3 positions are modified to phosphoserine: S248, S249, and S250. Disordered regions lie at residues S249–L269 and V280–R299. Phosphoserine is present on residues S320 and S322. A disordered region spans residues L327–S346. Positions R330–T341 are enriched in polar residues. The chain crosses the membrane as a helical span at residues I393 to V413. Topologically, residues S414–S440 are extracellular. The N-linked (GlcNAc...) asparagine glycan is linked to N428. Residues W441–I461 traverse the membrane as a helical segment. The Cytoplasmic segment spans residues E462–T473. The chain crosses the membrane as a helical span at residues A474–L494. At C495–R497 the chain is on the extracellular side. A helical transmembrane segment spans residues F498 to T518. Residues V519–G528 lie on the Cytoplasmic side of the membrane. The chain crosses the membrane as a helical span at residues L529–M549. N550 is a glycosylation site (N-linked (GlcNAc...) asparagine). At N550–S552 the chain is on the extracellular side. A helical membrane pass occupies residues M553–P573. Residues E574 to P636 lie on the Cytoplasmic side of the membrane. A helical membrane pass occupies residues L637–F657. Residues Y658 to N673 lie on the Extracellular side of the membrane. The chain crosses the membrane as a helical span at residues L674–I694. At D695–K700 the chain is on the cytoplasmic side. A helical transmembrane segment spans residues I701–F721. Over Y722–C740 the chain is Extracellular. A helical transmembrane segment spans residues F741–G761. The Cytoplasmic portion of the chain corresponds to E762–K767. A helical transmembrane segment spans residues I768 to T788. Residues K789–H801 lie on the Extracellular side of the membrane. A helical membrane pass occupies residues G802–V822. The Cytoplasmic portion of the chain corresponds to P823–M857. 2 positions are modified to phosphoserine: S845 and S846.

The protein belongs to the major facilitator superfamily. Sugar transporter (TC 2.A.1.1) family. Trehalose transporter subfamily. As to expression, expressed in perineurial glia of the outer layer of the nervous system that forms the blood brain barrier (at protein level). Expressed in the fat body (at protein level). May be specifically expressed in perineurial glia (at protein level). In terms of tissue distribution, may be specifically expressed in the fat body (at protein level).

It is found in the cell membrane. The protein resides in the vesicle. The enzyme catalyses alpha,alpha-trehalose(in) = alpha,alpha-trehalose(out). It catalyses the reaction D-glucose(out) = D-glucose(in). Low-capacity facilitative transporter for trehalose. Can also transport glucose. Does not transport maltose, sucrose, lactose or fructose. Mediates the bidirectional transfer of trehalose. Responsible for the transport of trehalose synthesized in the fat body and the incorporation of trehalose into other tissues that require a carbon source, thereby regulating trehalose levels in the hemolymph. Required in glial cells of the blood brain barrier to fuel glycolysis but not required in neurons. Neurons rely on the citric acid cycle for their energy needs and utilise alanine and lactate, by-products of glial cell glycolysis released into the hemolymph, as fuel. Increased expression in glial cells of the blood brain barrier during starvation and increased cell surface localization enhances carbohydrate uptake to protect the central nervous system from restricted nutrient availability. The sequence is that of Trehalose transporter 1 from Drosophila melanogaster (Fruit fly).